A 383-amino-acid polypeptide reads, in one-letter code: Putative glutamate--cysteine ligase 2-1 (383 aa).

The protein belongs to the glutamate--cysteine ligase type 2 family. YbdK subfamily.

It carries out the reaction L-cysteine + L-glutamate + ATP = gamma-L-glutamyl-L-cysteine + ADP + phosphate + H(+). In terms of biological role, ATP-dependent carboxylate-amine ligase which exhibits weak glutamate--cysteine ligase activity. The polypeptide is Putative glutamate--cysteine ligase 2-1 (Legionella pneumophila (strain Corby)).